A 626-amino-acid chain; its full sequence is 4-hydroxy-3-methylbut-2-en-1-yl diphosphate synthase (flavodoxin) (626 aa).

Residues C521, C524, C555, and E562 each contribute to the [4Fe-4S] cluster site.

This sequence belongs to the IspG family. Requires [4Fe-4S] cluster as cofactor.

It carries out the reaction (2E)-4-hydroxy-3-methylbut-2-enyl diphosphate + oxidized [flavodoxin] + H2O + 2 H(+) = 2-C-methyl-D-erythritol 2,4-cyclic diphosphate + reduced [flavodoxin]. It participates in isoprenoid biosynthesis; isopentenyl diphosphate biosynthesis via DXP pathway; isopentenyl diphosphate from 1-deoxy-D-xylulose 5-phosphate: step 5/6. Its function is as follows. Converts 2C-methyl-D-erythritol 2,4-cyclodiphosphate (ME-2,4cPP) into 1-hydroxy-2-methyl-2-(E)-butenyl 4-diphosphate. The chain is 4-hydroxy-3-methylbut-2-en-1-yl diphosphate synthase (flavodoxin) from Bacteroides fragilis (strain YCH46).